We begin with the raw amino-acid sequence, 201 residues long: Glycerol-3-phosphate acyltransferase (201 aa).

5 helical membrane-spanning segments follow: residues Met10 to Leu30, Leu60 to Ala80, Ala86 to Phe106, Leu116 to Val136, and Ala166 to Ile186.

The protein belongs to the PlsY family. In terms of assembly, probably interacts with PlsX.

The protein localises to the cell inner membrane. The enzyme catalyses an acyl phosphate + sn-glycerol 3-phosphate = a 1-acyl-sn-glycero-3-phosphate + phosphate. It participates in lipid metabolism; phospholipid metabolism. Its function is as follows. Catalyzes the transfer of an acyl group from acyl-phosphate (acyl-PO(4)) to glycerol-3-phosphate (G3P) to form lysophosphatidic acid (LPA). This enzyme utilizes acyl-phosphate as fatty acyl donor, but not acyl-CoA or acyl-ACP. This is Glycerol-3-phosphate acyltransferase from Brucella abortus (strain 2308).